The following is a 187-amino-acid chain: uncharacterized protein (187 aa).

The signal sequence occupies residues 1–25 (MSKFVKTAIAAAMVMGAFTSTATIA).

Belongs to the fimbrial protein family.

Part of the yfcOPQRSUV fimbrial operon. Could contribute to adhesion to various surfaces in specific environmental niches. Increases adhesion to eukaryotic T24 bladder epithelial cells in the absence of fim genes. This is an uncharacterized protein from Escherichia coli (strain K12).